A 625-amino-acid polypeptide reads, in one-letter code: ATP-dependent rRNA helicase spb4 (625 aa).

Positions 14–42 (WDALTPSLAEWILDAIKSMGFEKMTPVQA) match the Q motif motif. Residues 45-246 (IPLFMGNKDV…RVGLRNPVKI (202 aa)) enclose the Helicase ATP-binding domain. 58–65 (AVTGSGKT) serves as a coordination point for ATP. The DEAD box motif lies at 194-197 (DEAD). The 159-residue stretch at 278–436 (ALLSLLSQLQ…TTDDAAKILI (159 aa)) folds into the Helicase C-terminal domain. The disordered stretch occupies residues 550-597 (KKQREAWSQKHEKQDLKELKREKKKRKREIERLDKMTDEEKRVEQEKE). 2 stretches are compositionally biased toward basic and acidic residues: residues 553 to 570 (REAW…ELKR) and 577 to 597 (REIE…QEKE). The stretch at 557 to 614 (SQKHEKQDLKELKREKKKRKREIERLDKMTDEEKRVEQEKERELQALIEQVKRRKIED) forms a coiled coil.

This sequence belongs to the DEAD box helicase family. DDX55/SPB4 subfamily. As to quaternary structure, component of pre-60S ribosomal complexes.

It is found in the nucleus. The protein localises to the nucleolus. The enzyme catalyses ATP + H2O = ADP + phosphate + H(+). Its function is as follows. ATP-binding RNA helicase involved in the biogenesis of 60S ribosomal subunits. Binds 90S pre-ribosomal particles and dissociates from pre-60S ribosomal particles after processing of 27SB pre-rRNA. Required for the normal formation of 18S rRNA through the processing of pre-rRNAs at sites A0, A1 and A2, and the normal formation of 25S and 5.8S rRNAs through the processing of pre-rRNAs at sites C1 and C2. This is ATP-dependent rRNA helicase spb4 from Sclerotinia sclerotiorum (strain ATCC 18683 / 1980 / Ss-1) (White mold).